The sequence spans 502 residues: Myocilin (502 aa).

The signal sequence occupies residues M1–A31. Positions A82–Q183 form a coiled coil. The segment at A166–S198 is disordered. N229 is a glycosylation site (N-linked (GlcNAc...) asparagine). Residues G242–E501 form the Olfactomedin-like domain. Residues C243 and C431 are joined by a disulfide bond. Ca(2+)-binding residues include D378, N426, A427, V475, and D476.

Homodimer (via N-terminus). Can also form higher oligomers. Interacts with OLFM3, FN1, NRCAM, GLDN and NFASC. Interacts (via N-terminus) with MYL2. Interacts with SFRP1, FRZB, FZD7, FZD10, FZD1 and WIF1; regulates Wnt signaling. Interacts with SNTA1; regulates muscle hypertrophy. Interacts with ERBB2 and ERBB3; activates ERBB2-ERBB3 signaling pathway. Interacts with SNCG; affects its secretion and its aggregation. In terms of processing, palmitoylated. Post-translationally, undergoes a calcium-dependent proteolytic cleavage at Gln-225 by CAPN2 in the endoplasmic reticulum. The result is the production of two fragments, one of 35 kDa containing the C-terminal olfactomedin-like domain, and another of 20 kDa containing the N-terminal leucine zipper-like domain. Glycosylated. In terms of tissue distribution, highly expressed in skeletal muscle and retina. Also detected at lower levels in thyroid gland but not in other endocrine glands such as the adrenal or pituitary glands.

The protein resides in the secreted. It localises to the golgi apparatus. Its subcellular location is the cytoplasmic vesicle. The protein localises to the extracellular space. It is found in the extracellular matrix. The protein resides in the extracellular exosome. It localises to the mitochondrion. Its subcellular location is the mitochondrion intermembrane space. The protein localises to the mitochondrion inner membrane. It is found in the mitochondrion outer membrane. The protein resides in the rough endoplasmic reticulum. It localises to the cell projection. Its subcellular location is the cilium. The protein localises to the endoplasmic reticulum. Secreted glycoprotein regulating the activation of different signaling pathways in adjacent cells to control different processes including cell adhesion, cell-matrix adhesion, cytoskeleton organization and cell migration. Promotes substrate adhesion, spreading and formation of focal contacts. Negatively regulates cell-matrix adhesion and stress fiber assembly through Rho protein signal transduction. Modulates the organization of actin cytoskeleton by stimulating the formation of stress fibers through interactions with components of Wnt signaling pathways. Promotes cell migration through activation of PTK2 and the downstream phosphatidylinositol 3-kinase signaling. Plays a role in bone formation and promotes osteoblast differentiation in a dose-dependent manner through mitogen-activated protein kinase signaling. Mediates myelination in the peripheral nervous system through ERBB2/ERBB3 signaling. Plays a role as a regulator of muscle hypertrophy through the components of dystrophin-associated protein complex. Involved in positive regulation of mitochondrial depolarization. Plays a role in neurite outgrowth. May participate in the obstruction of fluid outflow in the trabecular meshwork. This is Myocilin (Myoc) from Rattus norvegicus (Rat).